A 740-amino-acid chain; its full sequence is Probable apyrase 7 (740 aa).

Residues methionine 1–alanine 113 lie on the Cytoplasmic side of the membrane. Residues valine 114–isoleucine 134 traverse the membrane as a helical segment. The Extracellular portion of the chain corresponds to tyrosine 135–lysine 581. Asparagine 137 carries N-linked (GlcNAc...) asparagine glycosylation. Valine 147–arginine 157 lines the ATP pocket. N-linked (GlcNAc...) asparagine glycosylation is present at asparagine 208. Catalysis depends on glutamate 284, which acts as the Proton acceptor. Position 309 to 319 (glycine 309 to glutamine 319) interacts with ATP. 4 N-linked (GlcNAc...) asparagine glycosylation sites follow: asparagine 330, asparagine 374, asparagine 439, and asparagine 484. The helical transmembrane segment at isoleucine 582–leucine 602 threads the bilayer. Over serine 603–methionine 740 the chain is Cytoplasmic. A disordered region spans residues phenylalanine 706 to methionine 740. A compositionally biased stretch (low complexity) spans serine 708–arginine 721.

It belongs to the GDA1/CD39 NTPase family. Ca(2+) is required as a cofactor. In terms of tissue distribution, detected in mature pollen grains. Also expressed in more diverse tissues such as roots, leaves, stems, pistils and sepals. More particularly expressed in the vascular bundle.

Its subcellular location is the membrane. The enzyme catalyses a ribonucleoside 5'-triphosphate + 2 H2O = a ribonucleoside 5'-phosphate + 2 phosphate + 2 H(+). Functionally, catalyzes the hydrolysis of phosphoanhydride bonds of nucleoside tri- and di-phosphates. Involved in the regulation of pollen and anther development. The sequence is that of Probable apyrase 7 (APY7) from Arabidopsis thaliana (Mouse-ear cress).